The sequence spans 281 residues: Deoxyribonuclease-1 (281 aa).

The signal sequence occupies residues 1-21 (MRSEMLTALLTLAVLLQVAGS). An N-linked (GlcNAc...) asparagine glycan is attached at N39. E99 is a catalytic residue. An intrachain disulfide couples C122 to C125. The active site involves H155.

It belongs to the DNase I family. The cofactor is Ca(2+). It depends on Mg(2+) as a cofactor. In terms of tissue distribution, equivalent levels in pancreas and parotid gland, low amounts in kidney, liver, small intestine, stomach and thymus.

It localises to the secreted. Its subcellular location is the zymogen granule. It is found in the nucleus envelope. The enzyme catalyses Endonucleolytic cleavage to 5'-phosphodinucleotide and 5'-phosphooligonucleotide end-products.. Functionally, serum endocuclease secreted into body fluids by a wide variety of exocrine and endocrine organs. Expressed by non-hematopoietic tissues and preferentially cleaves protein-free DNA. Among other functions, seems to be involved in cell death by apoptosis. Binds specifically to G-actin and blocks actin polymerization. Preferentially attacks double-stranded DNA and produces oligonucleotides with 5'-phospho and 3'-hydroxy termini. Together with DNASE1L3, plays a key role in degrading neutrophil extracellular traps (NETs). NETs are mainly composed of DNA fibers and are released by neutrophils to bind pathogens during inflammation. Degradation of intravascular NETs by DNASE1 and DNASE1L3 is required to prevent formation of clots that obstruct blood vessels and cause organ damage following inflammation. This chain is Deoxyribonuclease-1 (DNASE1), found in Oryctolagus cuniculus (Rabbit).